Here is a 162-residue protein sequence, read N- to C-terminus: Shikimate kinase (162 aa).

10–15 (GAGKST) contacts ATP. Residue S14 participates in Mg(2+) binding. The substrate site is built by D28, R52, and G73. Position 113 (R113) interacts with ATP. R129 serves as a coordination point for substrate.

The protein belongs to the shikimate kinase family. In terms of assembly, monomer. Mg(2+) is required as a cofactor.

It localises to the cytoplasm. It catalyses the reaction shikimate + ATP = 3-phosphoshikimate + ADP + H(+). It functions in the pathway metabolic intermediate biosynthesis; chorismate biosynthesis; chorismate from D-erythrose 4-phosphate and phosphoenolpyruvate: step 5/7. Its function is as follows. Catalyzes the specific phosphorylation of the 3-hydroxyl group of shikimic acid using ATP as a cosubstrate. The polypeptide is Shikimate kinase (Lactococcus lactis subsp. cremoris (strain SK11)).